Here is a 161-residue protein sequence, read N- to C-terminus: Large ribosomal subunit protein uL11 (161 aa).

This sequence belongs to the universal ribosomal protein uL11 family. In terms of assembly, part of the ribosomal stalk of the 50S ribosomal subunit. Interacts with L10 and the large rRNA to form the base of the stalk. L10 forms an elongated spine to which L12 dimers bind in a sequential fashion forming a multimeric L10(L12)X complex.

In terms of biological role, forms part of the ribosomal stalk which helps the ribosome interact with GTP-bound translation factors. The sequence is that of Large ribosomal subunit protein uL11 from Methanococcoides burtonii (strain DSM 6242 / NBRC 107633 / OCM 468 / ACE-M).